The sequence spans 238 residues: Ribonuclease PH (238 aa).

Phosphate-binding positions include Arg-86 and 124-126 (GTR).

This sequence belongs to the RNase PH family. In terms of assembly, homohexameric ring arranged as a trimer of dimers.

The catalysed reaction is tRNA(n+1) + phosphate = tRNA(n) + a ribonucleoside 5'-diphosphate. Phosphorolytic 3'-5' exoribonuclease that plays an important role in tRNA 3'-end maturation. Removes nucleotide residues following the 3'-CCA terminus of tRNAs; can also add nucleotides to the ends of RNA molecules by using nucleoside diphosphates as substrates, but this may not be physiologically important. Probably plays a role in initiation of 16S rRNA degradation (leading to ribosome degradation) during starvation. The sequence is that of Ribonuclease PH from Edwardsiella ictaluri (strain 93-146).